The sequence spans 371 residues: Putative glutamate--cysteine ligase 2 (371 aa).

Belongs to the glutamate--cysteine ligase type 2 family. YbdK subfamily.

The catalysed reaction is L-cysteine + L-glutamate + ATP = gamma-L-glutamyl-L-cysteine + ADP + phosphate + H(+). Functionally, ATP-dependent carboxylate-amine ligase which exhibits weak glutamate--cysteine ligase activity. The sequence is that of Putative glutamate--cysteine ligase 2 from Burkholderia lata (strain ATCC 17760 / DSM 23089 / LMG 22485 / NCIMB 9086 / R18194 / 383).